The sequence spans 86 residues: Progonadoliberin-2 (86 aa).

Residues 1–24 (MVSVARLVFMLGPLLCLGAQLSSS) form the signal peptide. Gln25 is subject to Pyrrolidone carboxylic acid. Glycine amide is present on Gly34.

The protein belongs to the GnRH family.

It is found in the secreted. Its function is as follows. Stimulates the secretion of gonadotropins. The polypeptide is Progonadoliberin-2 (gnrh2) (Oncorhynchus mykiss (Rainbow trout)).